The chain runs to 230 residues: Ribose-5-phosphate isomerase A (230 aa).

Residues 32-35, 85-88, and 98-101 contribute to the substrate site; these read TGST, DGAD, and KGGG. The active-site Proton acceptor is the E107. Residue K125 participates in substrate binding.

This sequence belongs to the ribose 5-phosphate isomerase family. As to quaternary structure, homodimer.

The catalysed reaction is aldehydo-D-ribose 5-phosphate = D-ribulose 5-phosphate. It functions in the pathway carbohydrate degradation; pentose phosphate pathway; D-ribose 5-phosphate from D-ribulose 5-phosphate (non-oxidative stage): step 1/1. In terms of biological role, catalyzes the reversible conversion of ribose-5-phosphate to ribulose 5-phosphate. The protein is Ribose-5-phosphate isomerase A of Burkholderia ambifaria (strain MC40-6).